Consider the following 349-residue polypeptide: Fe(3+) ions import ATP-binding protein FbpC (349 aa).

The 231-residue stretch at L7 to M237 folds into the ABC transporter domain. G39 to T46 provides a ligand contact to ATP.

Belongs to the ABC transporter superfamily. Fe(3+) ion importer (TC 3.A.1.10) family. The complex is composed of two ATP-binding proteins (FbpC), two transmembrane proteins (FbpB) and a solute-binding protein (FbpA).

It is found in the cell inner membrane. It catalyses the reaction Fe(3+)(out) + ATP + H2O = Fe(3+)(in) + ADP + phosphate + H(+). Its function is as follows. Part of the ABC transporter complex FbpABC involved in Fe(3+) ions import. Responsible for energy coupling to the transport system. In Pasteurella multocida (strain Pm70), this protein is Fe(3+) ions import ATP-binding protein FbpC.